We begin with the raw amino-acid sequence, 454 residues long: tRNA modification GTPase MnmE (454 aa).

(6S)-5-formyl-5,6,7,8-tetrahydrofolate-binding residues include R26, E84, and K123. In terms of domain architecture, TrmE-type G spans 219 to 378; the sequence is GLQVVIAGKP…LVDAITAHAG (160 aa). K(+) is bound at residue N229. GTP contacts are provided by residues 229–234, 248–254, and 273–276; these read NAGKSS, TDIAGTT, and DTAG. Position 233 (S233) interacts with Mg(2+). K(+) is bound by residues T248, I250, and T253. A Mg(2+)-binding site is contributed by T254. (6S)-5-formyl-5,6,7,8-tetrahydrofolate is bound at residue K454.

This sequence belongs to the TRAFAC class TrmE-Era-EngA-EngB-Septin-like GTPase superfamily. TrmE GTPase family. Homodimer. Heterotetramer of two MnmE and two MnmG subunits. Requires K(+) as cofactor.

The protein resides in the cytoplasm. Exhibits a very high intrinsic GTPase hydrolysis rate. Involved in the addition of a carboxymethylaminomethyl (cmnm) group at the wobble position (U34) of certain tRNAs, forming tRNA-cmnm(5)s(2)U34. This Acinetobacter baumannii (strain AYE) protein is tRNA modification GTPase MnmE.